The sequence spans 383 residues: MRNARSTLITTAGMAFAVLGLLFALAGPSAGRAEAAAGGIHVSNGRVVEGNGSAFVMRGVNHAYTWYPDRTGSIADIAAKGANTVRVVLSSGGRWTKTSASEVSALIGQCKANKVICVLEVHDTTGYGKDGATSLDQAGDYWVGVKSAAWRAQEDYVVVNIGNEPFGNTNYAAWTDATKSAIGKLRGAGLGHALMVDAPNWGQDWSGTMRSNAASVFASDPDRNTVFSIHMYGVYDTAAEVRDYLNAFVGNGLPIVVGEFGDQHSDGNPDEDAIMATAQSLGVGYLGWSWSGNGGGVEYLDMVNGFDPNSLTSWGNRILYGSNGIAATSRTATVYGGGGGSTGGTAPNGYPYCVNGGASDPDGDGWGWENSRSCVVRGSAADH.

The first 35 residues, 1–35 (MRNARSTLITTAGMAFAVLGLLFALAGPSAGRAEA), serve as a signal peptide directing secretion. The CBM10 domain occupies 339-377 (GGSTGGTAPNGYPYCVNGGASDPDGDGWGWENSRSCVVR).

This sequence belongs to the glycosyl hydrolase 5 (cellulase A) family. Monomer.

The catalysed reaction is Random hydrolysis of (1-&gt;4)-beta-D-mannosidic linkages in mannans, galactomannans and glucomannans.. This is Mannan endo-1,4-beta-mannosidase (manA) from Streptomyces lividans.